We begin with the raw amino-acid sequence, 130 residues long: Small ribosomal subunit protein uS8 (130 aa).

The protein belongs to the universal ribosomal protein uS8 family. In terms of assembly, part of the 30S ribosomal subunit. Contacts proteins S5 and S12.

In terms of biological role, one of the primary rRNA binding proteins, it binds directly to 16S rRNA central domain where it helps coordinate assembly of the platform of the 30S subunit. This is Small ribosomal subunit protein uS8 from Pseudomonas syringae pv. tomato (strain ATCC BAA-871 / DC3000).